A 443-amino-acid chain; its full sequence is D-serine dehydratase (443 aa).

Lys118 carries the N6-(pyridoxal phosphate)lysine modification.

The protein belongs to the serine/threonine dehydratase family. DsdA subfamily. In terms of assembly, monomer. The cofactor is pyridoxal 5'-phosphate.

It carries out the reaction D-serine = pyruvate + NH4(+). The chain is D-serine dehydratase from Yersinia enterocolitica serotype O:8 / biotype 1B (strain NCTC 13174 / 8081).